The primary structure comprises 286 residues: Bark agglutinin I polypeptide B (286 aa).

A signal peptide spans 1–31; that stretch reads MASYKFKTQNSFLLLLSISFFFLLLLNKVNS. Asn148 carries N-linked (GlcNAc...) asparagine glycosylation. Glu157 and Asp159 together coordinate Mn(2+). Residues Asp159, Asn163, and Asp167 each coordinate Ca(2+). The Mn(2+) site is built by Asp167 and His172.

This sequence belongs to the leguminous lectin family. In terms of assembly, RPbAI is composed of two polypeptides, A and B, that associate into five different tetrameric isolectins. The A4 combination is the only one devoid of agglutination activity. Isoform B4 displays maximal agglutination activity. Mostly in the axial and ray parenchymal cells of the inner bark. Fewer in the axial and ray parenchymal cells of the xylem. Strong expression in bark. The lectin accumulates in the inner bark in autumn and winter and disappears in may.

Functionally, bark lectins are storage proteins that probably maintain stocks of nitrogen during dormant period. Self-aggregatable molecules that can bind their own carbohydrate side chains. They could also play a role in the plant's defense against phytophagous invertebrates or herbivorous higher animals. This chain is Bark agglutinin I polypeptide B, found in Robinia pseudoacacia (Black locust).